The following is a 281-amino-acid chain: 3-mercaptopyruvate sulfurtransferase (281 aa).

Rhodanese domains follow at residues 17 to 135 (DDPE…LLEE) and 165 to 278 (HENT…LPVE). Arg-179 contributes to the substrate binding site. Cys-238 acts as the Cysteine persulfide intermediate in catalysis. A substrate specificity region spans residues 238 to 244 (CGSGVTA).

The protein resides in the cytoplasm. It catalyses the reaction 2-oxo-3-sulfanylpropanoate + [thioredoxin]-dithiol = [thioredoxin]-disulfide + hydrogen sulfide + pyruvate + H(+). Catalyzes the transfer of sulfur from 3-mercaptopyruvate to a thiol-containing acceptor to form an intramolecular disulfide releasing hydrogen sulfide and pyruvate. In Escherichia coli O157:H7, this protein is 3-mercaptopyruvate sulfurtransferase (sseA).